A 457-amino-acid polypeptide reads, in one-letter code: Argininosuccinate lyase (457 aa).

It belongs to the lyase 1 family. Argininosuccinate lyase subfamily.

It localises to the cytoplasm. The catalysed reaction is 2-(N(omega)-L-arginino)succinate = fumarate + L-arginine. It participates in amino-acid biosynthesis; L-arginine biosynthesis; L-arginine from L-ornithine and carbamoyl phosphate: step 3/3. This chain is Argininosuccinate lyase, found in Psychrobacter cryohalolentis (strain ATCC BAA-1226 / DSM 17306 / VKM B-2378 / K5).